The chain runs to 117 residues: Immunoglobulin lambda variable 1-51 (117 aa).

Positions 1–19 (MTCSPLLLTLLIHCTGSWA) are cleaved as a signal peptide. Position 20 is a pyrrolidone carboxylic acid (glutamine 20). The tract at residues 20-44 (QSVLTQPPSVSAAPGQKVTISCSGS) is framework-1. In terms of domain architecture, Ig-like spans 20–117 (QSVLTQPPSV…CGTWDSSLSA (98 aa)). Cysteine 41 and cysteine 108 are disulfide-bonded. The segment at 45–52 (SSNIGNNY) is complementarity-determining-1. The segment at 53 to 69 (VSWYQQLPGTAPKLLIY) is framework-2. The complementarity-determining-2 stretch occupies residues 70 to 72 (DNN). The tract at residues 73–108 (KRPSGIPDRFSGSKSGTSATLGITGLQTGDEADYYC) is framework-3. The segment at 109–117 (GTWDSSLSA) is complementarity-determining-3.

Immunoglobulins are composed of two identical heavy chains and two identical light chains; disulfide-linked.

Its subcellular location is the secreted. It localises to the cell membrane. In terms of biological role, v region of the variable domain of immunoglobulin light chains that participates in the antigen recognition. Immunoglobulins, also known as antibodies, are membrane-bound or secreted glycoproteins produced by B lymphocytes. In the recognition phase of humoral immunity, the membrane-bound immunoglobulins serve as receptors which, upon binding of a specific antigen, trigger the clonal expansion and differentiation of B lymphocytes into immunoglobulins-secreting plasma cells. Secreted immunoglobulins mediate the effector phase of humoral immunity, which results in the elimination of bound antigens. The antigen binding site is formed by the variable domain of one heavy chain, together with that of its associated light chain. Thus, each immunoglobulin has two antigen binding sites with remarkable affinity for a particular antigen. The variable domains are assembled by a process called V-(D)-J rearrangement and can then be subjected to somatic hypermutations which, after exposure to antigen and selection, allow affinity maturation for a particular antigen. The protein is Immunoglobulin lambda variable 1-51 of Homo sapiens (Human).